Reading from the N-terminus, the 404-residue chain is Cysteine desulfurase IscS (404 aa).

Residues 75 to 76 (AT), N155, Q183, and 203 to 205 (SAH) each bind pyridoxal 5'-phosphate. Residue K206 is modified to N6-(pyridoxal phosphate)lysine. T243 serves as a coordination point for pyridoxal 5'-phosphate. The Cysteine persulfide intermediate role is filled by C328. Position 328 (C328) interacts with [2Fe-2S] cluster.

This sequence belongs to the class-V pyridoxal-phosphate-dependent aminotransferase family. NifS/IscS subfamily. In terms of assembly, homodimer. Forms a heterotetramer with IscU, interacts with other sulfur acceptors. The cofactor is pyridoxal 5'-phosphate.

It localises to the cytoplasm. The catalysed reaction is (sulfur carrier)-H + L-cysteine = (sulfur carrier)-SH + L-alanine. The protein operates within cofactor biosynthesis; iron-sulfur cluster biosynthesis. In terms of biological role, master enzyme that delivers sulfur to a number of partners involved in Fe-S cluster assembly, tRNA modification or cofactor biosynthesis. Catalyzes the removal of elemental sulfur atoms from cysteine to produce alanine. Functions as a sulfur delivery protein for Fe-S cluster synthesis onto IscU, an Fe-S scaffold assembly protein, as well as other S acceptor proteins. This is Cysteine desulfurase IscS from Pseudomonas entomophila (strain L48).